The following is a 537-amino-acid chain: MMMKISFNTCFQILLGFIVFIASITLLGRIFSRPSKTKDRCRQLPPGRPGWPILGNLPELIMTRPRSKYFHLAMKELKTDIACFNFAGTHTITINSDEIAREAFRERDADLADRPQLSIVESIGDNYKTMGTSSYGEHFMKMKKVITTEIMSVKTLNMLEAARTIEADNLIAYIHSMYQRSETVDVRELSRVYGYAVTMRMLFGRRHVTKENMFSDDGRLGKAEKHHLEVIFNTLNCLPGFSPVDYVDRWLGGWNIDGEEERAKVNVNLVRSYNNPIIDERVEIWREKGGKAAVEDWLDTFITLKDQNGNYLVTPDEIKAQCVEFCIAAIDNPANNMEWTLGEMLKNPEILRKALKELDEVVGKDRLVQESDIRNLNYLKACCRETFRIHPSAHYVPPHVARQDTTLGGYFIPKGSHIHVCRPGLGRNPKIWKDPLAYEPERHLQGDGITKEVTLVETEMRFVSFSTGRRGCVGVKVGTIMMAMMLARFLQGFNWKLHRDFGPLSLEEDDASLLMAKPLLLSVEPRLASNLYPKFRP.

Residues 7–27 (FNTCFQILLGFIVFIASITLL) form a helical membrane-spanning segment.

It belongs to the cytochrome P450 family. Requires heme as cofactor. Highly expressed in hypocotyl and roots. Lower expression in siliques, stems and leaves. Barely detectable in flowers. Expressed only in the vascular bundles in apical plant parts.

It is found in the endoplasmic reticulum membrane. It catalyses the reaction L-hexahomomethionine + 2 reduced [NADPH--hemoprotein reductase] + 2 O2 = (E)-9-(methylsulfanyl)nonanal oxime + 2 oxidized [NADPH--hemoprotein reductase] + CO2 + 3 H2O + 2 H(+). The enzyme catalyses L-pentahomomethionine + 2 reduced [NADPH--hemoprotein reductase] + 2 O2 = (E)-8-(methylsulfanyl)octanal oxime + 2 oxidized [NADPH--hemoprotein reductase] + CO2 + 3 H2O + 2 H(+). It carries out the reaction an L-polyhomomethionine + 2 reduced [NADPH--hemoprotein reductase] + 2 O2 = an (E)-omega-(methylsulfanyl)-alkanal oxime + 2 oxidized [NADPH--hemoprotein reductase] + CO2 + 3 H2O + 2 H(+). Catalyzes the conversion of the long chain elongated methionines penta- and hexahomomethionine to their corresponding aldoximes 8-methylthiooctanaldoxime and 9-methylthiononanaldoxime. The chain is Hexahomomethionine N-hydroxylase (CYP79F2) from Arabidopsis thaliana (Mouse-ear cress).